A 549-amino-acid chain; its full sequence is Glucose-6-phosphate isomerase (549 aa).

E355 acts as the Proton donor in catalysis. Catalysis depends on residues H386 and K514.

This sequence belongs to the GPI family.

The protein resides in the cytoplasm. It catalyses the reaction alpha-D-glucose 6-phosphate = beta-D-fructose 6-phosphate. It functions in the pathway carbohydrate biosynthesis; gluconeogenesis. It participates in carbohydrate degradation; glycolysis; D-glyceraldehyde 3-phosphate and glycerone phosphate from D-glucose: step 2/4. Its function is as follows. Catalyzes the reversible isomerization of glucose-6-phosphate to fructose-6-phosphate. This chain is Glucose-6-phosphate isomerase, found in Salmonella paratyphi A (strain AKU_12601).